A 357-amino-acid polypeptide reads, in one-letter code: 3-isopropylmalate dehydrogenase (357 aa).

Residue 76 to 89 (GPKWDNEPSHNRPE) participates in NAD(+) binding. Arg96, Arg106, Arg135, and Asp223 together coordinate substrate. Asp223, Asp247, and Asp251 together coordinate Mg(2+). 281 to 293 (GSAPDIAGQDKAN) contributes to the NAD(+) binding site.

It belongs to the isocitrate and isopropylmalate dehydrogenases family. LeuB type 1 subfamily. In terms of assembly, homodimer. The cofactor is Mg(2+). Requires Mn(2+) as cofactor.

Its subcellular location is the cytoplasm. It catalyses the reaction (2R,3S)-3-isopropylmalate + NAD(+) = 4-methyl-2-oxopentanoate + CO2 + NADH. Its pathway is amino-acid biosynthesis; L-leucine biosynthesis; L-leucine from 3-methyl-2-oxobutanoate: step 3/4. Its function is as follows. Catalyzes the oxidation of 3-carboxy-2-hydroxy-4-methylpentanoate (3-isopropylmalate) to 3-carboxy-4-methyl-2-oxopentanoate. The product decarboxylates to 4-methyl-2 oxopentanoate. In Helicobacter hepaticus (strain ATCC 51449 / 3B1), this protein is 3-isopropylmalate dehydrogenase.